Here is a 94-residue protein sequence, read N- to C-terminus: Co-chaperonin GroES (94 aa).

It belongs to the GroES chaperonin family. In terms of assembly, heptamer of 7 subunits arranged in a ring. Interacts with the chaperonin GroEL.

The protein localises to the cytoplasm. In terms of biological role, together with the chaperonin GroEL, plays an essential role in assisting protein folding. The GroEL-GroES system forms a nano-cage that allows encapsulation of the non-native substrate proteins and provides a physical environment optimized to promote and accelerate protein folding. GroES binds to the apical surface of the GroEL ring, thereby capping the opening of the GroEL channel. This is Co-chaperonin GroES from Anoxybacillus flavithermus (strain DSM 21510 / WK1).